A 589-amino-acid polypeptide reads, in one-letter code: MAAADGDDSLYPIAVLIDELRNEDVQLRLNSIKKLSTIALALGVERTRSELLPFLTDTIYDEDEVLLALAEQLGTFTTLVGGPEYVHCLLPPLESLATVEETVVRDKAVESLRAISHEHSPSDLEAHFVPLVKRLAGGDWFTSRTSACGLFSVCYPRVSSAVKAELRQYFRNLCSDDTPMVRRAAASKLGEFAKVLELDNVKSEIIPMFSNLASDEQDSVRLLAVEACVNIAQLLPQEDLEALVMPTLRQAAEDKSWRVRYMVADKFTELQKAVGPEITKTDLVPAFQNLMKDCEAEVRAAASHKVKEFCENLSADCRENVIMSQILPCIKELVSDANQHVKSALASVIMGLSPILGKDNTIEHLLPLFLAQLKDECPEVRLNIISNLDCVNEVIGIRQLSQSLLPAIVELAEDAKWRVRLAIIEYMPLLAGQLGVEFFDEKLNSLCMAWLVDHVYAIREAATSNLKKLVEKFGKEWAHATIIPKVLAMSGDPNYLHRMTTLFCINVLSEVCGQDITTKHMLPTVLRMAGDPVANVRFNVAKSLQKIGPILDNSTLQSEVKPILEKLTQDQDVDVKYFAQEALTVLSLA.

Ala2 is subject to N-acetylalanine. HEAT repeat units follow at residues Asp8 to Arg46, Thr47 to Glu84, Tyr85 to Asp123, Leu124 to Ala161, Val162 to Asn200, Val201 to Asp239, Leu240 to Ile278, Thr279 to Val321, Ile322 to Asn360, Thr361 to Gln399, Leu400 to Phe438, Phe439 to Trp477, Ala478 to Ile516, Thr517 to Thr555, and Leu556 to Ala589. The interval Asp8–Gln399 is PP2A subunit B binding. A polyoma small and medium T antigens Binding region spans residues Thr47–Val321. Positions Tyr85–Asp239 are SV40 small T antigen binding. Lys280 is modified (N6-acetyllysine). The PP2A subunit C binding stretch occupies residues Leu400 to Ala589.

It belongs to the phosphatase 2A regulatory subunit A family. PP2A consists of a common heterodimeric core enzyme, composed of PPP2CA a 36 kDa catalytic subunit (subunit C) and PPP2R1A a 65 kDa constant regulatory subunit (PR65 or subunit A), that associates with a variety of regulatory subunits. Proteins that associate with the core dimer include three families of regulatory subunits B (the R2/B/PR55/B55, R3/B''/PR72/PR130/PR59 and R5/B'/B56 families), the 48 kDa variable regulatory subunit, viral proteins, and cell signaling molecules. Found in a complex with at least ARL2, PPP2CB, PPP2R1A, PPP2R2A, PPP2R5E and TBCD. Interacts with the PP2A C catalytic subunit PPP2CA. Interacts with the PP2A B subunit PPP2R2A. Interacts with the PP2A B subunit PPP2R5D. Interacts with FOXO1; the interaction dephosphorylates FOXO1 on AKT-mediated phosphorylation sites. Interacts with IPO9. Interacts with TP53 and SGO1. Interacts with PLA2G16; this interaction might decrease PP2A activity. Interacts with CTTNBP2NL. Interacts with GNA12; the interaction promotes protein phosphatase 2A activation causing dephosphorylation of MAPT. Interacts with CIP2A; this interaction stabilizes CIP2A. Interacts with PABIR1/FAM122A. Interacts with ADCY8; antagonizes interaction between ADCY8 and calmodulin. Interacts with CRTC3 (when phosphorylated at 'Ser-391'). Interacts with SPRY2. Part of the core of STRIPAK complexes composed of PP2A catalytic and scaffolding subunits, the striatins (PP2A regulatory subunits), the striatin-associated proteins MOB4, STRIP1 and STRIP2, PDCD10 and members of the STE20 kinases, such as STK24 and STK26. Component of the Integrator-PP2A (INTAC) complex, composed of the Integrator core complex and protein phosphatase 2A subunits PPP2CA and PPP2R1A. In terms of assembly, (Microbial infection) Interacts with JC virus small t antigen; this interaction inhibits PPP2R1A activity.

The protein resides in the cytoplasm. The protein localises to the nucleus. It localises to the chromosome. It is found in the centromere. Its subcellular location is the lateral cell membrane. The protein resides in the cell projection. The protein localises to the dendrite. Functionally, the PR65 subunit of protein phosphatase 2A serves as a scaffolding molecule to coordinate the assembly of the catalytic subunit and a variable regulatory B subunit. Upon interaction with GNA12 promotes dephosphorylation of microtubule associated protein TAU/MAPT. Required for proper chromosome segregation and for centromeric localization of SGO1 in mitosis. Together with RACK1 adapter, mediates dephosphorylation of AKT1 at 'Ser-473', preventing AKT1 activation and AKT-mTOR signaling pathway. Dephosphorylation of AKT1 is essential for regulatory T-cells (Treg) homeostasis and stability. Part of the striatin-interacting phosphatase and kinase (STRIPAK) complexes. STRIPAK complexes have critical roles in protein (de)phosphorylation and are regulators of multiple signaling pathways including Hippo, MAPK, nuclear receptor and cytoskeleton remodeling. Different types of STRIPAK complexes are involved in a variety of biological processes such as cell growth, differentiation, apoptosis, metabolism and immune regulation. Key mediator of a quality checkpoint during transcription elongation as part of the Integrator-PP2A (INTAC) complex. The INTAC complex drives premature transcription termination of transcripts that are unfavorably configured for transcriptional elongation: within the INTAC complex, acts as a scaffolding subunit for PPP2CA, which catalyzes dephosphorylation of the C-terminal domain (CTD) of Pol II subunit POLR2A/RPB1 and SUPT5H/SPT5, thereby preventing transcriptional elongation. Regulates the recruitment of the SKA complex to kinetochores. The sequence is that of Serine/threonine-protein phosphatase 2A 65 kDa regulatory subunit A alpha isoform from Homo sapiens (Human).